Reading from the N-terminus, the 132-residue chain is Small ribosomal subunit protein uS11 (132 aa).

It belongs to the universal ribosomal protein uS11 family. In terms of assembly, part of the 30S ribosomal subunit. Interacts with proteins S7 and S18. Binds to IF-3.

In terms of biological role, located on the platform of the 30S subunit, it bridges several disparate RNA helices of the 16S rRNA. Forms part of the Shine-Dalgarno cleft in the 70S ribosome. This Oenococcus oeni (strain ATCC BAA-331 / PSU-1) protein is Small ribosomal subunit protein uS11.